The sequence spans 513 residues: Transmembrane protein 151B (513 aa).

The interval 1–29 (MSPAAPVTESSAAEVHREQTDAPREPQRP) is disordered. The span at 14-28 (EVHREQTDAPREPQR) shows a compositional bias: basic and acidic residues. 3 helical membrane-spanning segments follow: residues 46 to 66 (CLLL…CQVT), 93 to 113 (YIYI…VECW), and 274 to 294 (LPWY…LSWP). 3 N-linked (GlcNAc...) asparagine glycosylation sites follow: Asn-366, Asn-418, and Asn-505.

This sequence belongs to the TMEM151 family.

It is found in the membrane. This is Transmembrane protein 151B (tmem151b) from Danio rerio (Zebrafish).